Here is a 364-residue protein sequence, read N- to C-terminus: Homeobox protein Nkx-6.1 (364 aa).

Residues 35 to 134 are disordered; the sequence is LYPATYPPLP…SSSSSASATS (100 aa). 2 stretches are compositionally biased toward low complexity: residues 48–92 and 109–134; these read PSSS…LSAA and ASGA…SATS. The repressor domain stretch occupies residues 101–268; the sequence is LSRPSMPVAS…KYLAGPERAR (168 aa). Arg189 is modified (asymmetric dimethylarginine). Residues 236-295 constitute a DNA-binding region (homeobox); sequence RKHTRPTFSGQQIFALEKTFEQTKYLAGPERARLAYSLGMTESQVKVWFQNRRTKWRKKH. The disordered stretch occupies residues 294-364; it reads KHAAEMATAK…LHASEAEGSS (71 aa). Basic and acidic residues predominate over residues 304 to 317; the sequence is KKQDSETERLKGTS. Residues 306-364 form an involved in DNA-binding region; the sequence is QDSETERLKGTSENEEEDDDYNKPLDPNSDDEKITQLLKKHKSSSGGLLLHASEAEGSS.

Pancreatic beta cells.

The protein localises to the nucleus. Together with NKX2-2 and IRX3 acts to restrict the generation of motor neurons to the appropriate region of the neural tube. Belongs to the class II proteins of neuronal progenitor factors, which are induced by SHH signals. Transcription factor which binds to specific A/T-rich DNA sequences in the promoter regions of a number of genes. Involved in transcriptional regulation in islet beta cells. Binds to the insulin promoter and is involved in regulation of the insulin gene. The chain is Homeobox protein Nkx-6.1 (NKX6-1) from Mesocricetus auratus (Golden hamster).